Here is a 271-residue protein sequence, read N- to C-terminus: Formamidopyrimidine-DNA glycosylase (271 aa).

Pro-2 functions as the Schiff-base intermediate with DNA in the catalytic mechanism. Residue Glu-3 is the Proton donor of the active site. The Proton donor; for beta-elimination activity role is filled by Lys-57. Residues His-90, Arg-109, and Lys-151 each contribute to the DNA site. Residues 236–270 (HVYGRGGETCTECGHLLSEIRLGQRTTVFCSLCQT) form an FPG-type zinc finger. The active-site Proton donor; for delta-elimination activity is Arg-260.

The protein belongs to the FPG family. As to quaternary structure, monomer. The cofactor is Zn(2+).

It carries out the reaction Hydrolysis of DNA containing ring-opened 7-methylguanine residues, releasing 2,6-diamino-4-hydroxy-5-(N-methyl)formamidopyrimidine.. It catalyses the reaction 2'-deoxyribonucleotide-(2'-deoxyribose 5'-phosphate)-2'-deoxyribonucleotide-DNA = a 3'-end 2'-deoxyribonucleotide-(2,3-dehydro-2,3-deoxyribose 5'-phosphate)-DNA + a 5'-end 5'-phospho-2'-deoxyribonucleoside-DNA + H(+). In terms of biological role, involved in base excision repair of DNA damaged by oxidation or by mutagenic agents. Acts as a DNA glycosylase that recognizes and removes damaged bases. Has a preference for oxidized purines, such as 7,8-dihydro-8-oxoguanine (8-oxoG). Has AP (apurinic/apyrimidinic) lyase activity and introduces nicks in the DNA strand. Cleaves the DNA backbone by beta-delta elimination to generate a single-strand break at the site of the removed base with both 3'- and 5'-phosphates. This is Formamidopyrimidine-DNA glycosylase from Shewanella amazonensis (strain ATCC BAA-1098 / SB2B).